Reading from the N-terminus, the 38-residue chain is Defensin (38 aa).

3 disulfide bridges follow: Cys4/Cys26, Cys11/Cys34, and Cys15/Cys36.

This sequence belongs to the invertebrate defensin family. Type 2 subfamily.

It is found in the secreted. Its function is as follows. Mediates the inducible antibacterial activity in larvae of A.cyanea. In Aeshna cyanea (Southern hawker dragonfly), this protein is Defensin.